A 476-amino-acid chain; its full sequence is 3-isopropylmalate dehydratase large subunit (476 aa).

Residues C353, C413, and C416 each contribute to the [4Fe-4S] cluster site.

It belongs to the aconitase/IPM isomerase family. LeuC type 1 subfamily. As to quaternary structure, heterodimer of LeuC and LeuD. Requires [4Fe-4S] cluster as cofactor.

It carries out the reaction (2R,3S)-3-isopropylmalate = (2S)-2-isopropylmalate. The protein operates within amino-acid biosynthesis; L-leucine biosynthesis; L-leucine from 3-methyl-2-oxobutanoate: step 2/4. Catalyzes the isomerization between 2-isopropylmalate and 3-isopropylmalate, via the formation of 2-isopropylmaleate. This chain is 3-isopropylmalate dehydratase large subunit, found in Yersinia pseudotuberculosis serotype IB (strain PB1/+).